We begin with the raw amino-acid sequence, 542 residues long: Chaperonin GroEL (542 aa).

Residues 29–32, Lys50, 86–90, Gly414, 477–479, and Asp493 each bind ATP; these read TMGP, DGTTT, and NAA.

Belongs to the chaperonin (HSP60) family. Forms a cylinder of 14 subunits composed of two heptameric rings stacked back-to-back. Interacts with the co-chaperonin GroES.

The protein resides in the cytoplasm. The enzyme catalyses ATP + H2O + a folded polypeptide = ADP + phosphate + an unfolded polypeptide.. In terms of biological role, together with its co-chaperonin GroES, plays an essential role in assisting protein folding. The GroEL-GroES system forms a nano-cage that allows encapsulation of the non-native substrate proteins and provides a physical environment optimized to promote and accelerate protein folding. In Sulfurovum sp. (strain NBC37-1), this protein is Chaperonin GroEL.